A 399-amino-acid polypeptide reads, in one-letter code: Chorismate synthase (399 aa).

Positions 40 and 46 each coordinate NADP(+). Residues 134 to 136 (RAS), 255 to 256 (QA), G299, 314 to 318 (KPIST), and R340 contribute to the FMN site.

This sequence belongs to the chorismate synthase family. As to quaternary structure, homotetramer. FMNH2 is required as a cofactor.

The enzyme catalyses 5-O-(1-carboxyvinyl)-3-phosphoshikimate = chorismate + phosphate. It functions in the pathway metabolic intermediate biosynthesis; chorismate biosynthesis; chorismate from D-erythrose 4-phosphate and phosphoenolpyruvate: step 7/7. In terms of biological role, catalyzes the anti-1,4-elimination of the C-3 phosphate and the C-6 proR hydrogen from 5-enolpyruvylshikimate-3-phosphate (EPSP) to yield chorismate, which is the branch point compound that serves as the starting substrate for the three terminal pathways of aromatic amino acid biosynthesis. This reaction introduces a second double bond into the aromatic ring system. The polypeptide is Chorismate synthase (Mycolicibacterium smegmatis (strain ATCC 700084 / mc(2)155) (Mycobacterium smegmatis)).